Reading from the N-terminus, the 323-residue chain is tRNA dimethylallyltransferase (323 aa).

12–19 (GPTAAGKT) serves as a coordination point for ATP. 14–19 (TAAGKT) serves as a coordination point for substrate. 2 interaction with substrate tRNA regions span residues 37–40 (DSAL) and 161–165 (QRLIR).

The protein belongs to the IPP transferase family. In terms of assembly, monomer. Mg(2+) serves as cofactor.

It catalyses the reaction adenosine(37) in tRNA + dimethylallyl diphosphate = N(6)-dimethylallyladenosine(37) in tRNA + diphosphate. Functionally, catalyzes the transfer of a dimethylallyl group onto the adenine at position 37 in tRNAs that read codons beginning with uridine, leading to the formation of N6-(dimethylallyl)adenosine (i(6)A). This chain is tRNA dimethylallyltransferase, found in Pseudomonas putida (strain GB-1).